The sequence spans 87 residues: Acyl-CoA-binding protein 2 (87 aa).

The ACB domain maps to 2–87 (VSQLFEEKAK…VDNLIAKYSS (86 aa)). An acyl-CoA-binding positions include 29-33 (YGLYK), Lys51, Lys55, and Tyr74.

It belongs to the ACBP family.

Functionally, binds medium- and long-chain acyl-CoA esters with very high affinity and may function as an intracellular carrier of acyl-CoA esters. The polypeptide is Acyl-CoA-binding protein 2 (ACB2) (Saccharomyces pastorianus (strain ATCC 76670 / Carlsberg bottom yeast no.2 / CBS 1503 / CLIB 180 / NBRC 10610 / NRRL Y-1525) (Saaz-type lager yeast)).